The primary structure comprises 86 residues: Putative regulatory protein Dvul_2085 (86 aa).

It belongs to the RemA family.

The polypeptide is Putative regulatory protein Dvul_2085 (Nitratidesulfovibrio vulgaris (strain DP4) (Desulfovibrio vulgaris)).